We begin with the raw amino-acid sequence, 501 residues long: Lysine--tRNA ligase (501 aa).

Mg(2+)-binding residues include Glu411 and Glu418.

It belongs to the class-II aminoacyl-tRNA synthetase family. In terms of assembly, homodimer. Mg(2+) serves as cofactor.

Its subcellular location is the cytoplasm. It catalyses the reaction tRNA(Lys) + L-lysine + ATP = L-lysyl-tRNA(Lys) + AMP + diphosphate. This chain is Lysine--tRNA ligase, found in Clostridium perfringens (strain ATCC 13124 / DSM 756 / JCM 1290 / NCIMB 6125 / NCTC 8237 / Type A).